The chain runs to 363 residues: 3,4-dihydroxy-2-butanone 4-phosphate synthase (363 aa).

The interval 1–201 (MTLSTAQEII…VADLIEYRNK (201 aa)) is DHBP synthase. Residues 27-28 (RE), Asp-32, 140-144 (RAGHT), and Glu-164 each bind D-ribulose 5-phosphate. Glu-28 serves as a coordination point for Mg(2+). Residue His-143 coordinates Mg(2+). Positions 202–363 (YETMIERISE…GLEIVEYVCS (162 aa)) are GTP cyclohydrolase II-like.

The protein in the N-terminal section; belongs to the DHBP synthase family. It in the C-terminal section; belongs to the GTP cyclohydrolase II family. Requires Mg(2+) as cofactor. Mn(2+) serves as cofactor.

It carries out the reaction D-ribulose 5-phosphate = (2S)-2-hydroxy-3-oxobutyl phosphate + formate + H(+). Its pathway is cofactor biosynthesis; riboflavin biosynthesis; 2-hydroxy-3-oxobutyl phosphate from D-ribulose 5-phosphate: step 1/1. In terms of biological role, catalyzes the conversion of D-ribulose 5-phosphate to formate and 3,4-dihydroxy-2-butanone 4-phosphate. The chain is 3,4-dihydroxy-2-butanone 4-phosphate synthase (ribB) from Photobacterium phosphoreum.